Here is a 271-residue protein sequence, read N- to C-terminus: Dermonecrotic toxin LarSicTox-alphaIB1c (271 aa).

H3 is a catalytic residue. The Mg(2+) site is built by E23 and D25. H39 functions as the Nucleophile in the catalytic mechanism. Disulfide bonds link C43/C49 and C45/C188. D83 contributes to the Mg(2+) binding site. N248 is a glycosylation site (N-linked (GlcNAc...) asparagine).

This sequence belongs to the arthropod phospholipase D family. Class II subfamily. Requires Mg(2+) as cofactor. In terms of tissue distribution, expressed by the venom gland.

The protein resides in the secreted. It carries out the reaction an N-(acyl)-sphingosylphosphocholine = an N-(acyl)-sphingosyl-1,3-cyclic phosphate + choline. The catalysed reaction is an N-(acyl)-sphingosylphosphoethanolamine = an N-(acyl)-sphingosyl-1,3-cyclic phosphate + ethanolamine. It catalyses the reaction a 1-acyl-sn-glycero-3-phosphocholine = a 1-acyl-sn-glycero-2,3-cyclic phosphate + choline. The enzyme catalyses a 1-acyl-sn-glycero-3-phosphoethanolamine = a 1-acyl-sn-glycero-2,3-cyclic phosphate + ethanolamine. Its function is as follows. Dermonecrotic toxins cleave the phosphodiester linkage between the phosphate and headgroup of certain phospholipids (sphingolipid and lysolipid substrates), forming an alcohol (often choline) and a cyclic phosphate. This toxin acts on sphingomyelin (SM). It may also act on ceramide phosphoethanolamine (CPE), lysophosphatidylcholine (LPC) and lysophosphatidylethanolamine (LPE), but not on lysophosphatidylserine (LPS), and lysophosphatidylglycerol (LPG). It acts by transphosphatidylation, releasing exclusively cyclic phosphate products as second products. Induces dermonecrosis, hemolysis, increased vascular permeability, edema, inflammatory response, and platelet aggregation. The polypeptide is Dermonecrotic toxin LarSicTox-alphaIB1c (Loxosceles arizonica (Arizona brown spider)).